Consider the following 210-residue polypeptide: Peptidyl-tRNA hydrolase (210 aa).

A tRNA-binding site is contributed by Tyr-14. The active-site Proton acceptor is the His-19. Residues Phe-64, Asn-66, and Asn-112 each coordinate tRNA.

This sequence belongs to the PTH family. As to quaternary structure, monomer.

The protein localises to the cytoplasm. The enzyme catalyses an N-acyl-L-alpha-aminoacyl-tRNA + H2O = an N-acyl-L-amino acid + a tRNA + H(+). Hydrolyzes ribosome-free peptidyl-tRNAs (with 1 or more amino acids incorporated), which drop off the ribosome during protein synthesis, or as a result of ribosome stalling. Functionally, catalyzes the release of premature peptidyl moieties from peptidyl-tRNA molecules trapped in stalled 50S ribosomal subunits, and thus maintains levels of free tRNAs and 50S ribosomes. This chain is Peptidyl-tRNA hydrolase, found in Methylorubrum extorquens (strain CM4 / NCIMB 13688) (Methylobacterium extorquens).